We begin with the raw amino-acid sequence, 218 residues long: Cytidylate kinase (218 aa).

ATP is bound at residue 21 to 29 (GPAASGKGT).

Belongs to the cytidylate kinase family. Type 1 subfamily.

The protein localises to the cytoplasm. It carries out the reaction CMP + ATP = CDP + ADP. The catalysed reaction is dCMP + ATP = dCDP + ADP. The protein is Cytidylate kinase of Rickettsia canadensis (strain McKiel).